Consider the following 165-residue polypeptide: uncharacterized protein (165 aa).

A disordered region spans residues 49-165 (QLKPQGPKRP…VAQQREIAQK (117 aa)). Polar residues predominate over residues 94-106 (MNNNNNYKISYTS). Low complexity predominate over residues 120–135 (TLQRTTPQAQPTPQQP). A compositionally biased stretch (polar residues) spans 139–157 (SRSSGGITGAVNNRPQMVA).

This is an uncharacterized protein from Caenorhabditis elegans.